Consider the following 412-residue polypeptide: Multifunctional CCA protein (412 aa).

ATP contacts are provided by glycine 8 and arginine 11. CTP-binding residues include glycine 8 and arginine 11. Mg(2+) contacts are provided by aspartate 21 and aspartate 23. ATP contacts are provided by arginine 91, arginine 137, and arginine 140. Residues arginine 91, arginine 137, and arginine 140 each coordinate CTP. One can recognise an HD domain in the interval 228–329 (TGIHTLMTLS…VKLFDSIDAW (102 aa)).

It belongs to the tRNA nucleotidyltransferase/poly(A) polymerase family. Bacterial CCA-adding enzyme type 1 subfamily. Monomer. Can also form homodimers and oligomers. Mg(2+) serves as cofactor. Requires Ni(2+) as cofactor.

The catalysed reaction is a tRNA precursor + 2 CTP + ATP = a tRNA with a 3' CCA end + 3 diphosphate. It carries out the reaction a tRNA with a 3' CCA end + 2 CTP + ATP = a tRNA with a 3' CCACCA end + 3 diphosphate. Catalyzes the addition and repair of the essential 3'-terminal CCA sequence in tRNAs without using a nucleic acid template. Adds these three nucleotides in the order of C, C, and A to the tRNA nucleotide-73, using CTP and ATP as substrates and producing inorganic pyrophosphate. tRNA 3'-terminal CCA addition is required both for tRNA processing and repair. Also involved in tRNA surveillance by mediating tandem CCA addition to generate a CCACCA at the 3' terminus of unstable tRNAs. While stable tRNAs receive only 3'-terminal CCA, unstable tRNAs are marked with CCACCA and rapidly degraded. The sequence is that of Multifunctional CCA protein from Escherichia coli O1:K1 / APEC.